Reading from the N-terminus, the 362-residue chain is Histidinol-phosphate aminotransferase (362 aa).

Position 219 is an N6-(pyridoxal phosphate)lysine (K219).

It belongs to the class-II pyridoxal-phosphate-dependent aminotransferase family. Histidinol-phosphate aminotransferase subfamily. As to quaternary structure, homodimer. Pyridoxal 5'-phosphate serves as cofactor.

The enzyme catalyses L-histidinol phosphate + 2-oxoglutarate = 3-(imidazol-4-yl)-2-oxopropyl phosphate + L-glutamate. It participates in amino-acid biosynthesis; L-histidine biosynthesis; L-histidine from 5-phospho-alpha-D-ribose 1-diphosphate: step 7/9. This Maricaulis maris (strain MCS10) (Caulobacter maris) protein is Histidinol-phosphate aminotransferase.